The primary structure comprises 360 residues: Phenylalanine--tRNA ligase alpha subunit (360 aa).

A Mg(2+)-binding site is contributed by Glu255.

It belongs to the class-II aminoacyl-tRNA synthetase family. Phe-tRNA synthetase alpha subunit type 1 subfamily. Tetramer of two alpha and two beta subunits. The cofactor is Mg(2+).

The protein localises to the cytoplasm. The enzyme catalyses tRNA(Phe) + L-phenylalanine + ATP = L-phenylalanyl-tRNA(Phe) + AMP + diphosphate + H(+). This chain is Phenylalanine--tRNA ligase alpha subunit, found in Rhizorhabdus wittichii (strain DSM 6014 / CCUG 31198 / JCM 15750 / NBRC 105917 / EY 4224 / RW1) (Sphingomonas wittichii).